The primary structure comprises 206 residues: Small ribosomal subunit protein uS4 (206 aa).

The interval 18 to 44 (NIWGRPKSPVNRREYGPGQHGQRRKGK) is disordered. Positions 94–157 (RRLDAVVYRA…KQLAVVLEAV (64 aa)) constitute an S4 RNA-binding domain.

The protein belongs to the universal ribosomal protein uS4 family. As to quaternary structure, part of the 30S ribosomal subunit. Contacts protein S5. The interaction surface between S4 and S5 is involved in control of translational fidelity.

One of the primary rRNA binding proteins, it binds directly to 16S rRNA where it nucleates assembly of the body of the 30S subunit. In terms of biological role, with S5 and S12 plays an important role in translational accuracy. In Jannaschia sp. (strain CCS1), this protein is Small ribosomal subunit protein uS4.